Consider the following 84-residue polypeptide: Small ribosomal subunit protein uS17 (84 aa).

The protein belongs to the universal ribosomal protein uS17 family. As to quaternary structure, part of the 30S ribosomal subunit.

Functionally, one of the primary rRNA binding proteins, it binds specifically to the 5'-end of 16S ribosomal RNA. This Vibrio cholerae serotype O1 (strain ATCC 39541 / Classical Ogawa 395 / O395) protein is Small ribosomal subunit protein uS17.